The chain runs to 252 residues: L-aspartate dehydrogenase (252 aa).

NAD(+) contacts are provided by Ala-119 and Asn-175. Residue His-203 is part of the active site.

This sequence belongs to the L-aspartate dehydrogenase family.

The enzyme catalyses L-aspartate + NADP(+) + H2O = oxaloacetate + NH4(+) + NADPH + H(+). It catalyses the reaction L-aspartate + NAD(+) + H2O = oxaloacetate + NH4(+) + NADH + H(+). It participates in cofactor biosynthesis; NAD(+) biosynthesis; iminoaspartate from L-aspartate (dehydrogenase route): step 1/1. In terms of biological role, specifically catalyzes the NAD or NADP-dependent dehydrogenation of L-aspartate to iminoaspartate. In Methanospirillum hungatei JF-1 (strain ATCC 27890 / DSM 864 / NBRC 100397 / JF-1), this protein is L-aspartate dehydrogenase.